The chain runs to 511 residues: MNSSGVEQGVVIAESEPPRGNRSRYAFACAILASMTSIILGYDIGVMSGASIFIKDDLKLSDVQLEILMGILNIYSLVGSGAAGRTSDWLGRRYTIVLAGAFFFCGALLMGFATNYPFIMVGRFVAGIGVGYAMMIAPVYTAEVAPASSRGFLTSFPEIFINIGILLGYVSNYFFSKLPEHLGWRFMLGVGAVPSVFLAIGVLAMPESPRWLVLQGRLGDAFKVLDKTSNTKEEAISRLDDIKRAVGIPDDMTDDVIVVPNKKSAGKGVWKDLLVRPTPSVRHILIACLGIHFAQQASGIDAVVLYSPTIFSKAGLKSKNDQLLATVAVGVVKTLFIVVGTCVVDRFGRRALLLTSMGGMFLSLTALGTSLTVINRNPGQTLKWAIGLAVTTVMTFVATFSIGAGPVTWVYCSEIFPVRLRAQGASLGVMLNRLMSGIIGMTFLSLSKGLTIGGAFLLFAGVAAAAWVFFFTFLPETRGIPLEEMETLFGSYTANKKNNSMSKDNEVVDGQ.

The next 12 helical transmembrane spans lie at 27–47 (FACAILASMTSIILGYDIGVM), 63–83 (VQLEILMGILNIYSLVGSGAA), 94–114 (YTIVLAGAFFFCGALLMGFAT), 124–144 (FVAGIGVGYAMMIAPVYTAEV), 151–171 (GFLTSFPEIFINIGILLGYVS), 186–206 (FMLGVGAVPSVFLAIGVLAMP), 284–304 (ILIACLGIHFAQQASGIDAVV), 324–344 (LATVAVGVVKTLFIVVGTCVV), 351–371 (ALLLTSMGGMFLSLTALGTSL), 384–404 (WAIGLAVTTVMTFVATFSIGA), 424–444 (GASLGVMLNRLMSGIIGMTFL), and 454–474 (GAFLLFAGVAAAAWVFFFTFL).

The protein belongs to the major facilitator superfamily. Sugar transporter (TC 2.A.1.1) family.

It localises to the membrane. Plasma membrane sugar-proton symporter. The chain is Putative polyol transporter 1 (PLT1) from Arabidopsis thaliana (Mouse-ear cress).